The sequence spans 410 residues: Mating-type locus allele B6 protein (410 aa).

Residues 1–110 (MSRDPKLSLS…VNVASPAVEY (110 aa)) are variable domain between B alleles. Residues 107-184 (AVEYRNLSED…NARRRSGWSH (78 aa)) constitute a DNA-binding region (homeobox; TALE-type). The segment at 111-410 (RNLSEDLPAY…PFFCLSIAFV (300 aa)) is highly conserved between B alleles. 3 disordered regions span residues 202 to 224 (RAKL…PSDD), 278 to 335 (TPKP…TPEL), and 373 to 393 (KARG…QQPD). Over residues 205–219 (LSSSNQSTPPSLTSE) the composition is skewed to polar residues. A Nuclear localization signal motif is present at residues 276 to 308 (KKTPKPGMPRPVTTVAKRQPARKTKPAAKPKSR). Over residues 294-307 (QPARKTKPAAKPKS) the composition is skewed to basic residues. Over residues 312–335 (PRASTTPSIDSTLDSSKLESTPEL) the composition is skewed to polar residues. A not essential for B6 function region spans residues 333-410 (PELSMCSTAD…PFFCLSIAFV (78 aa)). Basic residues predominate over residues 375-388 (RGNRKVKALPKRAG).

It belongs to the TALE/M-ATYP homeobox family.

It is found in the nucleus. In terms of biological role, the B locus has at least 25 alleles, and any combination of two different B alleles yields a multimeric regulatory protein, that activates genes responsible for the pathogenicity and for the sexual development of the fungus within the corn plant. The polypeptide is Mating-type locus allele B6 protein (Mycosarcoma maydis (Corn smut fungus)).